The chain runs to 5255 residues: Bacitracin synthase 1 (5255 aa).

The interval 39–612 is domain 1 (isoleucine-activating); the sequence is LHELFEEQAM…IKELSAFIEA (574 aa). A compositionally biased stretch (basic and acidic residues) spans 519–531; the sequence is VDRKALPEPDRTA. Positions 519–542 are disordered; that stretch reads VDRKALPEPDRTAGAENEYEAPRN. The 76-residue stretch at 539 to 614 folds into the Carrier 1 domain; the sequence is APRNETEEKL…ELSAFIEANH (76 aa). Serine 574 is modified (O-(pantetheine 4'-phosphoryl)serine). The interval 621–1037 is cyclization; that stretch reads TLVTRAADPE…ITWDYVEQIF (417 aa). The segment at 1109–1648 is domain 2 (cysteine-activating); it reads HHDEVMTYQE…FKNDTIIALD (540 aa). Carrier domains lie at 1580–1655, 2616–2691, 3659–3733, and 5166–5241; these read LPEN…KNRE, APRD…VRRR, PPRN…TEET, and APRN…LTAE. Residues serine 1615, serine 2651, serine 3694, and serine 5201 each carry the O-(pantetheine 4'-phosphoryl)serine modification. The segment at 2124–2689 is domain 3 (leucine-activating); it reads GKAIHQLFEE…IKGLRDISVR (566 aa). The interval 3164 to 3732 is domain 4 (glutamine-activating); sequence DHPAVAFGDE…KDLSRFITEE (569 aa). Residues 4668–5249 form a domain 5 (isoleucine-activating) region; that stretch reads LHELFEEQAM…AEAESAVSEE (582 aa).

The protein belongs to the ATP-dependent AMP-binding enzyme family. As to quaternary structure, large multienzyme complex of BA1, BA2 and BA3. Pantetheine 4'-phosphate serves as cofactor.

The catalysed reaction is L-glutamate = D-glutamate. It participates in antibiotic biosynthesis; bacitracin biosynthesis. In terms of biological role, activates five amino acids, incorporates two D-amino acids, releases and cyclizes the mature bacitracin. The protein is Bacitracin synthase 1 (bacA) of Bacillus licheniformis.